The sequence spans 126 residues: Nucleoside diphosphate kinase B (126 aa).

ATP is bound by residues lysine 6, phenylalanine 37, threonine 68, arginine 79, and asparagine 89. Catalysis depends on histidine 92, which acts as the Pros-phosphohistidine intermediate.

Belongs to the NDK family. It depends on Mg(2+) as a cofactor.

It is found in the cytoplasm. Its subcellular location is the nucleus. It localises to the cell projection. The protein localises to the lamellipodium. The protein resides in the ruffle. The enzyme catalyses a 2'-deoxyribonucleoside 5'-diphosphate + ATP = a 2'-deoxyribonucleoside 5'-triphosphate + ADP. It carries out the reaction a ribonucleoside 5'-diphosphate + ATP = a ribonucleoside 5'-triphosphate + ADP. Major role in the synthesis of nucleoside triphosphates other than ATP. This is Nucleoside diphosphate kinase B (nme2) from Macruronus magellanicus (Patagonian grenadier).